We begin with the raw amino-acid sequence, 707 residues long: Protein O-mannosyl-transferase TMEM260 (707 aa).

Transmembrane regions (helical) follow at residues 28 to 48 (GGVA…PPSV), 71 to 91 (YPLF…GSIA), 94 to 114 (VNLL…FTVF), 141 to 161 (IAAE…ALTV), 189 to 209 (NQHT…FQLL), 222 to 242 (LSLY…SSYL), 318 to 338 (NPSL…FFAW), and 356 to 376 (FWMQ…AAVV). The Lumenal portion of the chain corresponds to 377–707 (SETNRVLNSN…LQSLRNRKNV (331 aa)). N-linked (GlcNAc...) asparagine glycosylation is found at N407, N535, and N568.

The protein belongs to the glycosyltransferase 117 (GT117) family. In terms of tissue distribution, expressed in brain, heart, kidney, liver, lung, pancreas and placenta but are not detected in skeletal muscle.

It localises to the endoplasmic reticulum membrane. It is found in the membrane. It catalyses the reaction a di-trans,poly-cis-dolichyl beta-D-mannosyl phosphate + L-seryl-[protein] = 3-O-(alpha-D-mannosyl)-L-seryl-[protein] + a di-trans,poly-cis-dolichyl phosphate + H(+). The catalysed reaction is a di-trans,poly-cis-dolichyl beta-D-mannosyl phosphate + L-threonyl-[protein] = 3-O-(alpha-D-mannosyl)-L-threonyl-[protein] + a di-trans,poly-cis-dolichyl phosphate + H(+). In terms of biological role, O-mannosyl-transferase that transfers mannosyl residues to the hydroxyl group of serine or threonine residues of proteins. Specifically glycosylates the IPT/TIG domain of target proteins, such as MET and MST1R/RON. TMEM260-mediated O-mannosylated residues are composed of single mannose glycans that are not elongated or modified. This is Protein O-mannosyl-transferase TMEM260 from Homo sapiens (Human).